We begin with the raw amino-acid sequence, 1088 residues long: Extended synaptotagmin-1 (1088 aa).

N-acetylmethionine is present on Met-1. Over 1 to 30 (MERSPEEGAGPEPSGQSPATDSTRERDGGS) the chain is Cytoplasmic. Positions 1–38 (MERSPEEGAGPEPSGQSPATDSTRERDGGSGVPPAGPG) are disordered. The helical transmembrane segment at 31 to 51 (GVPPAGPGAASEALAVLTSFG) threads the bilayer. At 52-54 (RRL) the chain is on the lumenal side. The chain crosses the membrane as a helical span at residues 55–75 (LVLVPVYLAGAAGLSVGFVLF). The Cytoplasmic portion of the chain corresponds to 76–1088 (GLALYLGWRR…LIDDRDKGGS (1013 aa)). Positions 127 to 305 (DVEKAEWLNK…LPNRLLVPLV (179 aa)) constitute an SMP-LTD domain. 4 C2 domains span residues 304 to 425 (LVPD…DNWY), 446 to 572 (DAEK…QLSS), 618 to 740 (DAPP…DEWL), and 771 to 888 (QVNS…ALSG). Ser-316 carries the post-translational modification Phosphoserine; by CDK5. Ca(2+) is bound by residues Lys-336, Asp-337, Asp-349, Asp-396, Asp-398, Asp-400, Asp-402, and Asp-403. The disordered stretch occupies residues 599 to 630 (TEPGAQDWDSESPETGSSVDAPPRPYHTTPNS). An N6-acetyllysine modification is found at Lys-806. At Ser-809 the chain carries Phosphoserine. The tract at residues 911–930 (HSHSSSSLNEEPEVLGDPTH) is disordered. A phosphoserine mark is found at Ser-933 and Ser-947. Residues 955–1077 (PLGQVKLTVW…DLSQGAAQWY (123 aa)) enclose the C2 5 domain. The residue at position 993 (Tyr-993) is a Phosphotyrosine. Positions 1002–1009 (KNRGTKRK) are required for phosphatidylinositol 4,5-bisphosphate-dependent location at the cell membrane.

Belongs to the extended synaptotagmin family. As to quaternary structure, interacts with ESYT2 and ESYT3. Interacts with ADGRD1; inhibiting the G-protein-coupled receptor activity of ADGRD1. Interaction with ADGRD1 is abolished when cytosolic calcium increases, relieving ADGRD1 G-protein-coupled receptor activity. Interacts (phosphorylated form) with SLC2A4. In terms of processing, phosphorylated on Ser residues in insulin-treated adipocytes (in vitro); this promotes interaction with SLC2A4. As to expression, ubiquitously expressed with a higher expression in spleen and white adipose tissue.

The protein localises to the endoplasmic reticulum membrane. Its subcellular location is the cell membrane. Binds calcium (via the C2 domains) and translocates to sites of contact between the endoplasmic reticulum and the cell membrane in response to increased cytosolic calcium levels. Helps tether the endoplasmic reticulum to the cell membrane and promotes the formation of appositions between the endoplasmic reticulum and the cell membrane. Acts as an inhibitor of ADGRD1 G-protein-coupled receptor activity in absence of cytosolic calcium. Binds glycerophospholipids in a barrel-like domain and may play a role in cellular lipid transport. The protein is Extended synaptotagmin-1 (Esyt1) of Rattus norvegicus (Rat).